The chain runs to 208 residues: MEGSNGSPRMSTEQENTEMHLIECMLKHFKIQKVAISNAIRSTFPFLESLRDREFITGKMYEDLLDSCRSLVPVDKVIYRALEELEKKFDMTVLCKLFNEVNMEKYPDLNLLRRSFECGAKPALKTMNSSSEHCNISDWLRLEATLKASVYMVAFSITTSLTIVIIAIVSQSLQLRKECFNPFVYGLHNRDLQSKLYPWLCCQKKLLP.

An HSR domain is found at 6–121 (GSPRMSTEQE…LRRSFECGAK (116 aa)).

This Mus musculus (Mouse) protein is Component of Sp100-rs (Csprs).